The following is a 271-amino-acid chain: Chymotrypsin BII (271 aa).

The N-terminal stretch at 1–15 (MIGKLSLLLVCVAVA) is a signal peptide. The propeptide at 16–45 (SGNPAAGKPWHWKSPKPLVDPRIHVNATPR) is activation peptide. Positions 46 to 268 (IVGGVEATPH…YLDWIEQKTG (223 aa)) constitute a Peptidase S1 domain. An intrachain disulfide couples cysteine 71 to cysteine 87. Active-site charge relay system residues include histidine 86 and aspartate 132. Cystine bridges form between cysteine 196-cysteine 209 and cysteine 219-cysteine 245. Serine 223 (charge relay system) is an active-site residue.

The protein belongs to the peptidase S1 family.

It is found in the secreted. The protein localises to the extracellular space. It catalyses the reaction Preferential cleavage: Tyr-|-Xaa, Trp-|-Xaa, Phe-|-Xaa, Leu-|-Xaa.. Serine protease with chymotryptic and collagenolytic activities. This Penaeus vannamei (Whiteleg shrimp) protein is Chymotrypsin BII.